The chain runs to 110 residues: Acylphosphatase (110 aa).

Positions 24-110 (RVRVYVSGRV…SGGARGFEVR (87 aa)) constitute an Acylphosphatase-like domain. Residues Arg-39 and Asn-57 contribute to the active site.

It belongs to the acylphosphatase family.

It carries out the reaction an acyl phosphate + H2O = a carboxylate + phosphate + H(+). The protein is Acylphosphatase (acyP) of Rubrobacter xylanophilus (strain DSM 9941 / JCM 11954 / NBRC 16129 / PRD-1).